The sequence spans 626 residues: Mitogen-activated protein kinase kinase kinase 3 (626 aa).

The PB1 domain maps to 44–123; it reads DVRIKFEHNG…KSLRILLLSQ (80 aa). Disordered stretches follow at residues 125 to 184 and 218 to 273; these read RNHT…YVPE and SSAE…VKGG. Polar residues-rich tracts occupy residues 128 to 137, 144 to 155, 165 to 174, and 219 to 247; these read TSSSPHSGVS, PSQSAGDINTIY, LSVSSQNPGR, and SAEN…QMSR. Residues S147 and S166 each carry the phosphoserine modification. S250 and S312 each carry phosphoserine. The segment covering 250 to 270 has biased composition (basic and acidic residues); that stretch reads SFPDNRKECSDRETQLYDKGV. S337 carries the post-translational modification Phosphoserine; by SGK1. S340 is modified (phosphoserine). A Protein kinase domain is found at 362–622; that stretch reads WRRGKLLGQG…AEELLTHHFA (261 aa). ATP contacts are provided by residues 368–376 and K391; that span reads LGQGAFGRV. D489 serves as the catalytic Proton acceptor.

It belongs to the protein kinase superfamily. STE Ser/Thr protein kinase family. MAP kinase kinase kinase subfamily. In terms of assembly, binds both upstream activators and downstream substrates in multimolecular complexes. Part of a complex with MAP2K3, RAC1 and CCM2. Interacts with MAP2K5 and SPAG9. The cofactor is Mg(2+). Phosphorylation at Ser-166 and Ser-337 by SGK1 inhibits its activity.

The catalysed reaction is L-seryl-[protein] + ATP = O-phospho-L-seryl-[protein] + ADP + H(+). The enzyme catalyses L-threonyl-[protein] + ATP = O-phospho-L-threonyl-[protein] + ADP + H(+). Its activity is regulated as follows. Activated by phosphorylation on Thr-530. In terms of biological role, component of a protein kinase signal transduction cascade. Mediates activation of the NF-kappa-B, AP1 and DDIT3 transcriptional regulators. The polypeptide is Mitogen-activated protein kinase kinase kinase 3 (Map3k3) (Mus musculus (Mouse)).